Consider the following 383-residue polypeptide: Outer membrane protein Omp-EA (383 aa).

Residues 1 to 21 (MKRNILAVLIPALLAAGAANA) form the signal peptide. Topologically, residues 22-30 (AEIYNKDGN) are periplasmic. Residues 31-45 (KLDLYGKVKAMRYLS) form a beta stranded membrane-spanning segment. The Extracellular segment spans residues 46-58 (DADSNASNNADKS). A beta stranded transmembrane segment spans residues 59 to 70 (YTRIGFKGQTLI). Topologically, residues 71–74 (NDQL) are periplasmic. Residues 75–86 (TGYGQWEYNFSL) traverse the membrane as a beta stranded segment. Residues 87-100 (SNSESSSDAQSGNK) lie on the Extracellular side of the membrane. Residues 101–109 (TRLGFAGLK) traverse the membrane as a beta stranded segment. Residues 110-112 (LKD) lie on the Periplasmic side of the membrane. The chain crosses the membrane as a beta stranded span at residues 113-122 (YGSVDYGRNY). Over 123–155 (GVIYDVEAFTDMMPEFGATGYTRTDTYMLTRGN) the chain is Extracellular. The beta stranded transmembrane segment at 156 to 164 (SMLTWRNSD) threads the bilayer. Topologically, residues 165 to 171 (FFGLVDG) are periplasmic. Residues 172–178 (LKIALQY) traverse the membrane as a beta stranded segment. Residues 179 to 198 (QGKNEGSGTRATNVSNGDGY) lie on the Extracellular side of the membrane. Residues 199–206 (GASLSYKI) form a beta stranded membrane-spanning segment. Residues 207–209 (VEG) are Periplasmic-facing. A beta stranded transmembrane segment spans residues 210–219 (LTINGAMSSS). At 220–243 (NRLNANSASSTTSQKMAAYGSGGR) the chain is on the extracellular side. The beta stranded transmembrane segment at 244–252 (AEAWATGLK) threads the bilayer. Residues 253–258 (YDANGV) are Periplasmic-facing. A beta stranded membrane pass occupies residues 259–268 (YLAGTYAETR). The Extracellular portion of the chain corresponds to 269–296 (NTNPFSGASYTFAGNSTATAVSGYANKV). The chain crosses the membrane as a beta stranded span at residues 297–307 (QNTELVAQYQF). The Periplasmic segment spans residues 308–310 (DSG). Residues 311–319 (LRPSLAYVQ) traverse the membrane as a beta stranded segment. Topologically, residues 320–335 (TKAKDIENGIGDADLS) are extracellular. Residues 336-346 (KFVDVAATYYF) traverse the membrane as a beta stranded segment. The Periplasmic portion of the chain corresponds to 347–351 (NKNMS). The beta stranded transmembrane segment at 352 to 361 (AFVDYKVNLL) threads the bilayer. Residues 362 to 372 (SDSNKLHLNTD) lie on the Extracellular side of the membrane. A beta stranded membrane pass occupies residues 373-383 (DIVAVGLVYQF).

This sequence belongs to the Gram-negative porin family. Homotrimer.

It is found in the cell outer membrane. Its function is as follows. May play an important role in maintaining pathogenicity in plants. The chain is Outer membrane protein Omp-EA (omp-EA) from Erwinia amylovora (Fire blight bacteria).